Reading from the N-terminus, the 85-residue chain is Conotoxin Lt28.3 (85 aa).

The N-terminal stretch at 1-21 (MPKLEMMLLVLLILPLCYIDA) is a signal peptide. The propeptide occupies 22–40 (VGPLPPWNMEDEIIEHWQK).

Belongs to the conotoxin D superfamily. Contains 5 disulfide bonds. In terms of tissue distribution, expressed by the venom duct.

It is found in the secreted. Its function is as follows. Probable neurotoxin. The chain is Conotoxin Lt28.3 from Conus litteratus (Lettered cone).